We begin with the raw amino-acid sequence, 176 residues long: Cytochrome b (176 aa).

3 helical membrane-spanning segments follow: residues 33–53 (FGSL…FLAM), 77–98 (WVLR…YLHV), and 113–133 (WNMG…GYVL). His-83 and His-97 together coordinate heme b.

This sequence belongs to the cytochrome b family. As to quaternary structure, the cytochrome bc1 complex contains 11 subunits: 3 respiratory subunits (MT-CYB, CYC1 and UQCRFS1), 2 core proteins (UQCRC1 and UQCRC2) and 6 low-molecular weight proteins (UQCRH/QCR6, UQCRB/QCR7, UQCRQ/QCR8, UQCR10/QCR9, UQCR11/QCR10 and a cleavage product of UQCRFS1). This cytochrome bc1 complex then forms a dimer. The cofactor is heme b.

It localises to the mitochondrion inner membrane. Functionally, component of the ubiquinol-cytochrome c reductase complex (complex III or cytochrome b-c1 complex) that is part of the mitochondrial respiratory chain. The b-c1 complex mediates electron transfer from ubiquinol to cytochrome c. Contributes to the generation of a proton gradient across the mitochondrial membrane that is then used for ATP synthesis. This is Cytochrome b (MT-CYB) from Nycticeius humeralis (Evening bat).